The following is a 205-amino-acid chain: Holliday junction branch migration complex subunit RuvA (205 aa).

The domain I stretch occupies residues 1–64 (MIGKLRGIVD…DEAIRLIGFT (64 aa)). The interval 65-143 (TDSEREWFRL…DSMGLSAALE (79 aa)) is domain II. The flexible linker stretch occupies residues 144–152 (VGVNGEAVS). A domain III region spans residues 153 to 205 (SVSAPARDAVSALVNLGYPQAQAMGAVAAAAKRLDDAASTEQLIRHGLKELAR).

Belongs to the RuvA family. Homotetramer. Forms an RuvA(8)-RuvB(12)-Holliday junction (HJ) complex. HJ DNA is sandwiched between 2 RuvA tetramers; dsDNA enters through RuvA and exits via RuvB. An RuvB hexamer assembles on each DNA strand where it exits the tetramer. Each RuvB hexamer is contacted by two RuvA subunits (via domain III) on 2 adjacent RuvB subunits; this complex drives branch migration. In the full resolvosome a probable DNA-RuvA(4)-RuvB(12)-RuvC(2) complex forms which resolves the HJ.

Its subcellular location is the cytoplasm. The RuvA-RuvB-RuvC complex processes Holliday junction (HJ) DNA during genetic recombination and DNA repair, while the RuvA-RuvB complex plays an important role in the rescue of blocked DNA replication forks via replication fork reversal (RFR). RuvA specifically binds to HJ cruciform DNA, conferring on it an open structure. The RuvB hexamer acts as an ATP-dependent pump, pulling dsDNA into and through the RuvAB complex. HJ branch migration allows RuvC to scan DNA until it finds its consensus sequence, where it cleaves and resolves the cruciform DNA. This is Holliday junction branch migration complex subunit RuvA from Parvibaculum lavamentivorans (strain DS-1 / DSM 13023 / NCIMB 13966).